The chain runs to 396 residues: Phosphoglycerate kinase (396 aa).

Residues 21–23 (DFN), Arg-36, 59–62 (HLGK), Arg-119, and Arg-156 each bind substrate. ATP is bound by residues Lys-206, Gly-294, Glu-325, and 352–355 (GGDS).

This sequence belongs to the phosphoglycerate kinase family. Monomer.

The protein resides in the cytoplasm. It carries out the reaction (2R)-3-phosphoglycerate + ATP = (2R)-3-phospho-glyceroyl phosphate + ADP. Its pathway is carbohydrate degradation; glycolysis; pyruvate from D-glyceraldehyde 3-phosphate: step 2/5. The polypeptide is Phosphoglycerate kinase (Listeria welshimeri serovar 6b (strain ATCC 35897 / DSM 20650 / CCUG 15529 / CIP 8149 / NCTC 11857 / SLCC 5334 / V8)).